We begin with the raw amino-acid sequence, 357 residues long: Peptide chain release factor 1 (357 aa).

The residue at position 234 (Q234) is an N5-methylglutamine. Over residues 284–307 the composition is skewed to basic and acidic residues; sequence KKQEQRSNDRKQQVGSGDRSERIR. The interval 284-313 is disordered; it reads KKQEQRSNDRKQQVGSGDRSERIRTYNFPQ.

This sequence belongs to the prokaryotic/mitochondrial release factor family. In terms of processing, methylated by PrmC. Methylation increases the termination efficiency of RF1.

The protein resides in the cytoplasm. Functionally, peptide chain release factor 1 directs the termination of translation in response to the peptide chain termination codons UAG and UAA. This chain is Peptide chain release factor 1, found in Borrelia hermsii (strain HS1 / DAH).